A 561-amino-acid polypeptide reads, in one-letter code: MTTLKITGMTCDSCAAHVKEALEKVPGVQSALVSYPKGTAQLAIEAGTSSDALTTAVAGLGYEATLADAPPTDNRAGLLDKMRGWIGAADKPSGNERPLQVVVIGSGGAAMAAALKAVEQGAHVSLIERGTIGGTCVNVGCVPSKIMIRAAHIAHLRRESPFDGGIAATVPAIDRSKLLAQQQARVEELRHAKYEGILDGNPAITVVHGEARFKDEQSLVVRLNDGGERVVAFDRCLVATGASPAVPPIPGLKESPYWTSTEALVSDTLPERLAVIGSSVVALELAQAFARLGSQVTILARNTLFFRDDPAIGEAVTAAFRAEGIKVLEHTQASQVAHVDGEFVLTTGYGEIRADQLLVATGRAPNTRSLALEAAGVAANAQGAIVIDKGMRTSTPHIYAAGDCTDQPQFVYVAAAAGTRAAINMTGGDAALDLTAMPAVVFTDPQVATVGYSEAEAHHDGIETDSRTLTLDNVPRALANFDTRGFIKLVIEEGSGRLIGVQAVAPEAGELIQTAVLAIRNRMTVQELADQLFPYLTMVEGLKLAAQTFSKDVKQLSCCAG.

The HMA domain maps to 1–65 (MTTLKITGMT…AVAGLGYEAT (65 aa)). Residues cysteine 11 and cysteine 14 each contribute to the a metal cation site. FAD-binding residues include alanine 110, glycine 130, and threonine 135. Residues cysteine 136 and cysteine 141 are joined by a disulfide bond. 4 residues coordinate FAD: lysine 145, alanine 211, aspartate 403, and valine 411. The Hg(2+) site is built by cysteine 558 and cysteine 559.

The protein belongs to the class-I pyridine nucleotide-disulfide oxidoreductase family. As to quaternary structure, homodimer. The cofactor is FAD.

The enzyme catalyses Hg + NADP(+) + H(+) = Hg(2+) + NADPH. Its function is as follows. Resistance to Hg(2+) in bacteria appears to be governed by a specialized system which includes mercuric reductase. MerA protein is responsible for volatilizing mercury as Hg(0). The polypeptide is Mercuric reductase (merA) (Acinetobacter calcoaceticus).